The chain runs to 370 residues: tRNA-specific 2-thiouridylase MnmA (370 aa).

Residues 10 to 17 and Met-36 each bind ATP; that span reads AMSGGVDS. Cys-111 serves as the catalytic Nucleophile. An intrachain disulfide couples Cys-111 to Cys-209. Gly-135 lines the ATP pocket. An interaction with tRNA region spans residues 159 to 161; the sequence is KDQ. The active-site Cysteine persulfide intermediate is the Cys-209.

This sequence belongs to the MnmA/TRMU family.

The protein resides in the cytoplasm. The enzyme catalyses S-sulfanyl-L-cysteinyl-[protein] + uridine(34) in tRNA + AH2 + ATP = 2-thiouridine(34) in tRNA + L-cysteinyl-[protein] + A + AMP + diphosphate + H(+). Functionally, catalyzes the 2-thiolation of uridine at the wobble position (U34) of tRNA, leading to the formation of s(2)U34. The sequence is that of tRNA-specific 2-thiouridylase MnmA from Koribacter versatilis (strain Ellin345).